Reading from the N-terminus, the 118-residue chain is Ribosome-binding factor A (118 aa).

Belongs to the RbfA family. As to quaternary structure, monomer. Binds 30S ribosomal subunits, but not 50S ribosomal subunits or 70S ribosomes.

The protein localises to the cytoplasm. Its function is as follows. One of several proteins that assist in the late maturation steps of the functional core of the 30S ribosomal subunit. Associates with free 30S ribosomal subunits (but not with 30S subunits that are part of 70S ribosomes or polysomes). Required for efficient processing of 16S rRNA. May interact with the 5'-terminal helix region of 16S rRNA. This is Ribosome-binding factor A from Bacillus cereus (strain B4264).